The primary structure comprises 682 residues: DNA ligase (682 aa).

Residues 42 to 46 (DAEYD), 91 to 92 (SL), and E124 each bind NAD(+). Catalysis depends on K126, which acts as the N6-AMP-lysine intermediate. Residues R147, E184, K302, and K326 each coordinate NAD(+). 4 residues coordinate Zn(2+): C420, C423, C438, and C444. Residues 603 to 682 (IADNPLKGKS…QEFIALTGEN (80 aa)) enclose the BRCT domain.

Belongs to the NAD-dependent DNA ligase family. LigA subfamily. Mg(2+) serves as cofactor. Mn(2+) is required as a cofactor.

It carries out the reaction NAD(+) + (deoxyribonucleotide)n-3'-hydroxyl + 5'-phospho-(deoxyribonucleotide)m = (deoxyribonucleotide)n+m + AMP + beta-nicotinamide D-nucleotide.. In terms of biological role, DNA ligase that catalyzes the formation of phosphodiester linkages between 5'-phosphoryl and 3'-hydroxyl groups in double-stranded DNA using NAD as a coenzyme and as the energy source for the reaction. It is essential for DNA replication and repair of damaged DNA. This Actinobacillus pleuropneumoniae serotype 7 (strain AP76) protein is DNA ligase.